Reading from the N-terminus, the 56-residue chain is U4-myrmicitoxin-Tb1a (56 aa).

Residues 1-26 (MQPSYLLLTFAIIFVMVIMYSPAVEA) form the signal peptide. The propeptide occupies 27-40 (KAGADADADAHADA). Gly-53 is subject to Glycine amide.

In terms of processing, contains 1 disulfide bond. Expressed by the venom gland.

The protein localises to the secreted. Its function is as follows. Venom protein with unknown function. Does not induce paralysis when a high dose is administered by intrathoracic injection into the blowfly Lucilia caesar. In Tetramorium bicarinatum (Tramp ant), this protein is U4-myrmicitoxin-Tb1a.